A 240-amino-acid chain; its full sequence is Adapter protein MecA (240 aa).

A compositionally biased stretch (basic and acidic residues) spans 119–132; that stretch reads QRKQQKKNHQDKQQ. Residues 119-138 form a disordered region; sequence QRKQQKKNHQDKQQRRAHKP.

It belongs to the MecA family. In terms of assembly, homodimer.

Its function is as follows. Enables the recognition and targeting of unfolded and aggregated proteins to the ClpC protease or to other proteins involved in proteolysis. In Staphylococcus epidermidis (strain ATCC 35984 / DSM 28319 / BCRC 17069 / CCUG 31568 / BM 3577 / RP62A), this protein is Adapter protein MecA.